The primary structure comprises 474 residues: Probable aspartate--tRNA ligase, cytoplasmic (474 aa).

Residue Glu203 participates in L-aspartate binding. An aspartate region spans residues 225–228; sequence QLYK. Residue Arg247 coordinates L-aspartate. ATP is bound by residues 247–249, 255–257, and Glu397; these read RAE and RYL. Residues Ser400 and Arg404 each coordinate L-aspartate. ATP is bound at residue 445–448; the sequence is GLER.

Belongs to the class-II aminoacyl-tRNA synthetase family. Type 2 subfamily. Homodimer.

It is found in the cytoplasm. The enzyme catalyses tRNA(Asp) + L-aspartate + ATP = L-aspartyl-tRNA(Asp) + AMP + diphosphate. The chain is Probable aspartate--tRNA ligase, cytoplasmic from Enterocytozoon bieneusi (strain H348) (Microsporidian parasite).